The sequence spans 79 residues: Conotoxin PnMSGL-03 (79 aa).

The first 20 residues, 1 to 20, serve as a signal peptide directing secretion; it reads MSRLGIMVLTLLLLVFIVTS. Residues 21–44 constitute a propeptide that is removed on maturation; it reads HQDAGEKQATQRDAINFRWRRSLI. Cystine bridges form between cysteine 52–cysteine 64, cysteine 56–cysteine 73, and cysteine 63–cysteine 77. Residue leucine 78 is modified to Leucine amide.

This sequence belongs to the conotoxin O3 superfamily. As to expression, expressed by the venom duct.

The protein localises to the secreted. The polypeptide is Conotoxin PnMSGL-03 (Conus pennaceus (Feathered cone)).